The primary structure comprises 328 residues: Tetraacyldisaccharide 4'-kinase (328 aa).

ATP is bound at residue 55-62 (TAGGNGKT).

This sequence belongs to the LpxK family.

The enzyme catalyses a lipid A disaccharide + ATP = a lipid IVA + ADP + H(+). It participates in glycolipid biosynthesis; lipid IV(A) biosynthesis; lipid IV(A) from (3R)-3-hydroxytetradecanoyl-[acyl-carrier-protein] and UDP-N-acetyl-alpha-D-glucosamine: step 6/6. In terms of biological role, transfers the gamma-phosphate of ATP to the 4'-position of a tetraacyldisaccharide 1-phosphate intermediate (termed DS-1-P) to form tetraacyldisaccharide 1,4'-bis-phosphate (lipid IVA). The polypeptide is Tetraacyldisaccharide 4'-kinase (Escherichia coli O81 (strain ED1a)).